Reading from the N-terminus, the 329-residue chain is Cathepsin K (329 aa).

An N-terminal signal peptide occupies residues 1–15 (MWGLKVLLLPVVSFA). Positions 16-114 (LYPEEILDTH…TLYIPEWEGR (99 aa)) are cleaved as a propeptide — activation peptide. Asn-103 carries an N-linked (GlcNAc...) asparagine glycan. Cystine bridges form between Cys-136–Cys-177, Cys-170–Cys-210, and Cys-269–Cys-318. The active site involves Cys-139. Catalysis depends on residues His-276 and Asn-296.

The protein belongs to the peptidase C1 family. Predominantly expressed in osteoclasts (bones). Expressed in thyroid epithelial cells.

It localises to the lysosome. The protein localises to the secreted. The protein resides in the apical cell membrane. It carries out the reaction Broad proteolytic activity. With small-molecule substrates and inhibitors, the major determinant of specificity is P2, which is preferably Leu, Met &gt; Phe, and not Arg.. Thiol protease involved in osteoclastic bone resorption and may participate partially in the disorder of bone remodeling. Displays potent endoprotease activity against fibrinogen at acid pH. May play an important role in extracellular matrix degradation. Involved in the release of thyroid hormone thyroxine (T4) by limited proteolysis of TG/thyroglobulin in the thyroid follicle lumen. This is Cathepsin K (CTSK) from Homo sapiens (Human).